The following is a 278-amino-acid chain: Rhomboid protease GlpG (278 aa).

The next 6 helical transmembrane spans lie at 95-115 (GPLT…MQIV), 143-163 (AFLH…WYLA), 170-190 (LGTG…GWGQ), 192-212 (LFSG…MGYV), 224-241 (ISLP…LVAG), and 245-267 (ILGL…LMAF). The active-site Nucleophile is Ser202. His255 is a catalytic residue.

Belongs to the peptidase S54 family.

It is found in the cell inner membrane. The enzyme catalyses Cleaves type-1 transmembrane domains using a catalytic dyad composed of serine and histidine that are contributed by different transmembrane domains.. Its function is as follows. Rhomboid-type serine protease that catalyzes intramembrane proteolysis. This chain is Rhomboid protease GlpG, found in Yersinia enterocolitica serotype O:8 / biotype 1B (strain NCTC 13174 / 8081).